Reading from the N-terminus, the 475-residue chain is Zinc finger protein 296 (475 aa).

The disordered stretch occupies residues 1 to 78; it reads MSRRKAGSAP…SPGPMPAGAA (78 aa). Residue lysine 35 forms a Glycyl lysine isopeptide (Lys-Gly) (interchain with G-Cter in SUMO2) linkage. 3 C2H2-type zinc fingers span residues 157–180, 231–253, and 259–281; these read LSCL…QWDH, PTCP…MRSH, and YACD…KKTH. Residues 275–385 are disordered; it reads NRHKKTHRQV…KSGGKSRGPG (111 aa). 2 stretches are compositionally biased toward low complexity: residues 295 to 313 and 326 to 338; these read SQEQ…AAAP and GAAA…EPGA. Gly residues predominate over residues 339 to 351; sequence PGSGAQAGPGGDT. The span at 354 to 367 shows a compositional bias: polar residues; sequence AITTEQRTDPANSQ. 3 C2H2-type zinc fingers span residues 386 to 408, 414 to 436, and 445 to 468; these read GSCE…RRSH, YTCE…RRMH, and FECP…RQKH.

This sequence belongs to the krueppel C2H2-type zinc-finger protein family. Interacts with KLF4.

It is found in the nucleus. May be a transcriptional corepressor with KLF4. The chain is Zinc finger protein 296 (ZNF296) from Homo sapiens (Human).